We begin with the raw amino-acid sequence, 740 residues long: E3 ubiquitin-protein ligase DTX3L (740 aa).

N-acetylalanine is present on Ala2. Position 9 is a phosphoserine (Ser9). Disordered stretches follow at residues 96-119 (NTRPQISSLTQSQAETPSGDMHQH), 195-231 (SEQKQQFSPSMTERKPLSQQERDSCISPSEPETKAEQ), and 524-551 (HETPMDIDSDDSKAASPPLKGSVSSEAS). Polar residues-rich tracts occupy residues 98-111 (RPQISSLTQSQAET) and 195-205 (SEQKQQFSPSM). Position 202 is a phosphoserine (Ser202). Over residues 206–218 (TERKPLSQQERDS) the composition is skewed to basic and acidic residues. A phosphoserine mark is found at Ser221, Ser532, and Ser539. The RING-type zinc-finger motif lies at 561 to 600 (CVICMDTISNKKVLPKCKHEFCAPCINKAMSYKPICPTCQ).

Belongs to the Deltex family. Homodimer and heterodimer. Can heterodimerize with DTX1, enhancing its ubiquitin ligase activity in vitro. Interacts (via N-terminus) with ADP ribosyltransferase PARP9/BAL1 (via PARP catalytic domain) forming a stable complex; the interaction is required to activate PARP9 but is dispensable for DTX3L catalytic activity. Forms a complex with STAT1 and PARP9 independently of IFNB1 or IFNG-mediated STAT1 'Tyr-701' phosphorylation. Found in a complex with PARP9, STAT1 and H2BC9. Found in a complex with E3 ligase ITCH and ESCRT-0 components HGS and STAM. Interacts (via C-terminus) with ITCH; the interaction is increased upon CXCL12 stimulation and inhibits ITCH catalytic activity; the interaction is direct. Interacts with HGS and STAM; the interaction brings together HGS and STAM and promotes their recruitment to early endosomes. As to quaternary structure, (Microbial infection) Interacts with encephalomyocarditis virus (EMCV) C3 protease; the interaction results in C3 protease 'Lys-48'-linked ubiquitination. In terms of assembly, (Microbial infection) Interacts with human rhinovirus (HRV) C3 protease; the interaction results in C3 protease 'Lys-48'-linked ubiquitination. In terms of processing, autoubiquitinated.

It is found in the cytoplasm. It localises to the nucleus. The protein resides in the early endosome membrane. Its subcellular location is the lysosome membrane. It carries out the reaction S-ubiquitinyl-[E2 ubiquitin-conjugating enzyme]-L-cysteine + [acceptor protein]-L-lysine = [E2 ubiquitin-conjugating enzyme]-L-cysteine + N(6)-ubiquitinyl-[acceptor protein]-L-lysine.. It participates in protein modification; protein ubiquitination. With respect to regulation, binding to PARP9 enhances DTX3L catalytic activity. Functionally, E3 ubiquitin-protein ligase which, in association with ADP-ribosyltransferase PARP9, plays a role in DNA damage repair and in interferon-mediated antiviral responses. Monoubiquitinates several histones, including histone H2A, H2B, H3 and H4. In response to DNA damage, mediates monoubiquitination of 'Lys-91' of histone H4 (H4K91ub1). The exact role of H4K91ub1 in DNA damage response is still unclear but it may function as a licensing signal for additional histone H4 post-translational modifications such as H4 'Lys-20' methylation (H4K20me). PARP1-dependent PARP9-DTX3L-mediated ubiquitination promotes the rapid and specific recruitment of 53BP1/TP53BP1, UIMC1/RAP80, and BRCA1 to DNA damage sites. By monoubiquitinating histone H2B H2BC9/H2BJ and thereby promoting chromatin remodeling, positively regulates STAT1-dependent interferon-stimulated gene transcription and thus STAT1-mediated control of viral replication. Independently of its catalytic activity, promotes the sorting of chemokine receptor CXCR4 from early endosome to lysosome following CXCL12 stimulation by reducing E3 ligase ITCH activity and thus ITCH-mediated ubiquitination of endosomal sorting complex required for transport ESCRT-0 components HGS and STAM. In addition, required for the recruitment of HGS and STAM to early endosomes. In association with PARP9, plays a role in antiviral responses by mediating 'Lys-48'-linked ubiquitination of encephalomyocarditis virus (EMCV) and human rhinovirus (HRV) C3 proteases and thus promoting their proteasomal-mediated degradation. This Homo sapiens (Human) protein is E3 ubiquitin-protein ligase DTX3L (DTX3L).